Here is a 260-residue protein sequence, read N- to C-terminus: Coiled-coil domain-containing protein 127 (260 aa).

The stretch at alanine 76–asparagine 139 forms a coiled coil.

This is Coiled-coil domain-containing protein 127 (Ccdc127) from Mus musculus (Mouse).